The primary structure comprises 40 residues: Neutral phospholipase A2 homolog cannitoxin beta chain 2 (40 aa).

Heterotrimer of alpha, beta, and gamma chains; non-covalently linked. In terms of tissue distribution, expressed by the venom gland.

Its subcellular location is the secreted. Heterotrimer: Snake venom phospholipase A2 (PLA2) heterotrimer that acts as a potent presynaptic neurotoxin by blocking synaptic transmission and synaptic vesicle recycling. Enzymatic activity is essential for the neurotoxic effects. May act by binding in a calcium-dependent fashion to neurotonal pentraxin-1 (NPTX1) and neurotonal pentraxin-2 (NPTX2), but not to neuronal pentraxin receptor (NPTXR). Also binds to taipoxin-associated calcium binding protein 49 (RCN2), a protein localized in the lumen of endoplasmic reticulum. Functionally, monomer (beta chain): Snake venom phospholipase A2 homolog that is neither toxic nor enzymatically active. Does not bind calcium. This chain is Neutral phospholipase A2 homolog cannitoxin beta chain 2, found in Oxyuranus scutellatus canni (Papuan taipan).